A 141-amino-acid polypeptide reads, in one-letter code: Large ribosomal subunit protein uL11 (141 aa).

Belongs to the universal ribosomal protein uL11 family. As to quaternary structure, part of the ribosomal stalk of the 50S ribosomal subunit. Interacts with L10 and the large rRNA to form the base of the stalk. L10 forms an elongated spine to which L12 dimers bind in a sequential fashion forming a multimeric L10(L12)X complex. Post-translationally, one or more lysine residues are methylated.

Its function is as follows. Forms part of the ribosomal stalk which helps the ribosome interact with GTP-bound translation factors. The chain is Large ribosomal subunit protein uL11 from Prochlorococcus marinus (strain MIT 9515).